Here is a 104-residue protein sequence, read N- to C-terminus: Ycf49-like protein (104 aa).

The next 3 membrane-spanning stretches (helical) occupy residues 6–26 (IPTW…IALV), 41–61 (LAWG…WHFF), and 73–93 (LQAL…WWIY).

The protein belongs to the ycf49 family.

The protein resides in the cell membrane. This chain is Ycf49-like protein, found in Synechocystis sp. (strain ATCC 27184 / PCC 6803 / Kazusa).